The following is a 502-amino-acid chain: L-amino-acid oxidase BmooLAAO-I (502 aa).

The first 18 residues, 1–18 (MNVFFTFSLLFLAALGSC), serve as a signal peptide directing secretion. An intrachain disulfide couples C28 to C191. FAD-binding positions include 61-62 (MS), 81-82 (EA), R89, and 105-108 (GPMR). R108 provides a ligand contact to substrate. Residue N190 is glycosylated (N-linked (GlcNAc...) asparagine). H241 is a binding site for substrate. FAD is bound at residue V279. C349 and C430 are disulfide-bonded. Y390 lines the substrate pocket. Residues E475 and 482–487 (GWIDST) contribute to the FAD site. 482 to 483 (GW) is a binding site for substrate.

The protein belongs to the flavin monoamine oxidase family. FIG1 subfamily. As to quaternary structure, homodimer; non-covalently linked. FAD serves as cofactor. N-glycosylated. The enzymatic activity is not affected by deglycosylation. In terms of tissue distribution, expressed by the venom gland.

The protein resides in the secreted. It carries out the reaction an L-alpha-amino acid + O2 + H2O = a 2-oxocarboxylate + H2O2 + NH4(+). It catalyses the reaction L-leucine + O2 + H2O = 4-methyl-2-oxopentanoate + H2O2 + NH4(+). The catalysed reaction is L-phenylalanine + O2 + H2O = 3-phenylpyruvate + H2O2 + NH4(+). The enzyme catalyses L-tryptophan + O2 + H2O = indole-3-pyruvate + H2O2 + NH4(+). It carries out the reaction L-methionine + O2 + H2O = 4-methylsulfanyl-2-oxobutanoate + H2O2 + NH4(+). It catalyses the reaction L-isoleucine + O2 + H2O = (S)-3-methyl-2-oxopentanoate + H2O2 + NH4(+). The catalysed reaction is L-histidine + O2 + H2O = 3-(imidazol-5-yl)pyruvate + H2O2 + NH4(+). The enzyme catalyses L-tyrosine + O2 + H2O = 3-(4-hydroxyphenyl)pyruvate + H2O2 + NH4(+). It carries out the reaction L-alanine + O2 + H2O = pyruvate + H2O2 + NH4(+). It catalyses the reaction L-valine + O2 + H2O = 3-methyl-2-oxobutanoate + H2O2 + NH4(+). With respect to regulation, its enzymatic activities is reduced when it is exposed to Ca(2+), Zn(2+), Al(3+), Cu(2+) or Ni(2+) salts. Functionally, catalyzes an oxidative deamination of predominantly hydrophobic and aromatic L-amino acids, thus producing hydrogen peroxide that may contribute to the toxicity of the venom. Shows very high activity on L-Met, and L-Leu, high activity on L-Ile, L-Phe and L-Tyr and moderate activity on L-His, L-Val and L-Ala. Exhibits diverse biological activities, such as edema, apoptosis of tumor cell lines, antibacterial activities against both Gram-positive and Gram-negative bacteria, as well as induction of platelet aggregation. Effects of snake L-amino oxidases on platelets are controversial, since they either induce aggregation or inhibit agonist-induced aggregation. These different effects are probably due to different experimental conditions. Unlike other snake venom L-amino acid oxidases, does not induce hemorrhage. It may also induce hemolysis. Has parasiticidal activities against and leishmania, as a result of enzyme-catalyzed hydrogen peroxide production. The chain is L-amino-acid oxidase BmooLAAO-I from Bothrops moojeni (Lance-headed viper).